A 178-amino-acid chain; its full sequence is MDKQKIADSIRAVYNYKPGVIFRDITTLIGDAEVFKEVINILRSRYENQSIDFIAAIEARGFIFGSALAYALGIGFVPIRKKGKLPYNTISEKYTLEYGTDELHIHTDAFRDKKNAKVVLIDDLIATGGTAEASVKLIKSIGAQCVEAAFVINLKGLEGEKKLAPYTQVFSIVEYEGK.

Belongs to the purine/pyrimidine phosphoribosyltransferase family. As to quaternary structure, homodimer.

The protein resides in the cytoplasm. The enzyme catalyses AMP + diphosphate = 5-phospho-alpha-D-ribose 1-diphosphate + adenine. The protein operates within purine metabolism; AMP biosynthesis via salvage pathway; AMP from adenine: step 1/1. Functionally, catalyzes a salvage reaction resulting in the formation of AMP, that is energically less costly than de novo synthesis. The chain is Adenine phosphoribosyltransferase from Helicobacter hepaticus (strain ATCC 51449 / 3B1).